Reading from the N-terminus, the 91-residue chain is MNLKVLKKTEDELRIEFEGERHTLLNLLRSELLEDERVVIATYDAKFPIMDNPVFRLKTRGVDPLDVIRDASARIADLCDEFLREYEEAVR.

The protein belongs to the archaeal Rpo11/eukaryotic RPB11/RPC19 RNA polymerase subunit family. Part of the RNA polymerase complex.

Its subcellular location is the cytoplasm. It catalyses the reaction RNA(n) + a ribonucleoside 5'-triphosphate = RNA(n+1) + diphosphate. Its function is as follows. DNA-dependent RNA polymerase (RNAP) catalyzes the transcription of DNA into RNA using the four ribonucleoside triphosphates as substrates. This is DNA-directed RNA polymerase subunit Rpo11 from Methanothrix thermoacetophila (strain DSM 6194 / JCM 14653 / NBRC 101360 / PT) (Methanosaeta thermophila).